The sequence spans 284 residues: UDP-N-acetylenolpyruvoylglucosamine reductase (284 aa).

Positions 21–180 (KIGGPARLFV…LKAAFKLKKA (160 aa)) constitute an FAD-binding PCMH-type domain. The active site involves Arg159. Ser209 (proton donor) is an active-site residue. Glu280 is a catalytic residue.

It belongs to the MurB family. Requires FAD as cofactor.

It is found in the cytoplasm. The enzyme catalyses UDP-N-acetyl-alpha-D-muramate + NADP(+) = UDP-N-acetyl-3-O-(1-carboxyvinyl)-alpha-D-glucosamine + NADPH + H(+). Its pathway is cell wall biogenesis; peptidoglycan biosynthesis. Its function is as follows. Cell wall formation. This Pseudothermotoga lettingae (strain ATCC BAA-301 / DSM 14385 / NBRC 107922 / TMO) (Thermotoga lettingae) protein is UDP-N-acetylenolpyruvoylglucosamine reductase.